The following is a 346-amino-acid chain: Heparan sulfate glucosamine 3-O-sulfotransferase 5 (346 aa).

At 1–12 the chain is on the cytoplasmic side; the sequence is MLFKQQVWLRQK. The helical; Signal-anchor for type II membrane protein transmembrane segment at 13-32 threads the bilayer; it reads LLVLGSLAVGSLLYLVARVG. The Lumenal portion of the chain corresponds to 33–346; the sequence is SLDRLQPICP…QITGRTLNWP (314 aa). N-linked (GlcNAc...) asparagine glycosylation is present at asparagine 75. 100–104 is a binding site for 3'-phosphoadenylyl sulfate; sequence KGGTR. Substrate contacts are provided by residues 122–128 and 155–158; these read EIHFFDN and KSPA. N-linked (GlcNAc...) asparagine glycosylation occurs at asparagine 173. Arginine 183 and serine 191 together coordinate 3'-phosphoadenylyl sulfate. N-linked (GlcNAc...) asparagine glycosylation is present at asparagine 204. 226–227 is a substrate binding site; it reads YK. N-linked (GlcNAc...) asparagine glycosylation is present at asparagine 287. Tyrosine 293 contacts 3'-phosphoadenylyl sulfate. Cysteine 294 and cysteine 304 are disulfide-bonded. 309-313 is a 3'-phosphoadenylyl sulfate binding site; sequence KGRIH.

It belongs to the sulfotransferase 1 family.

The protein localises to the golgi apparatus membrane. It catalyses the reaction alpha-D-glucosaminyl-[heparan sulfate](n) + 3'-phosphoadenylyl sulfate = 3-sulfo-alpha-D-glucosaminyl-[heparan sulfate](n) + adenosine 3',5'-bisphosphate + H(+). In terms of biological role, sulfotransferase that utilizes 3'-phospho-5'-adenylyl sulfate (PAPS) to catalyze the transfer of a sulfo group to position 3 of glucosamine residues in heparan. Catalyzes the rate limiting step in the biosynthesis of heparan sulfate (HSact). This modification is a crucial step in the biosynthesis of anticoagulant heparan sulfate as it completes the structure of the antithrombin pentasaccharide binding site. Also generates GlcUA-GlcNS or IdoUA-GlcNS and IdoUA2S-GlcNH2. This is Heparan sulfate glucosamine 3-O-sulfotransferase 5 (Hs3st5) from Mus musculus (Mouse).